Consider the following 156-residue polypeptide: Large ribosomal subunit protein uL15 (156 aa).

The span at 1–13 shows a compositional bias: basic and acidic residues; that stretch reads MKLNEIKDNEGAT. The segment at 1-41 is disordered; it reads MKLNEIKDNEGATKNRKRLGRGIGSGSGKTAGRGVKGQKAR. Gly residues predominate over residues 21-35; the sequence is RGIGSGSGKTAGRGV.

This sequence belongs to the universal ribosomal protein uL15 family. In terms of assembly, part of the 50S ribosomal subunit.

Functionally, binds to the 23S rRNA. The sequence is that of Large ribosomal subunit protein uL15 from Sinorhizobium medicae (strain WSM419) (Ensifer medicae).